Here is a 1167-residue protein sequence, read N- to C-terminus: Non-toxic nonhemagglutinin (1167 aa).

Positions 1-381 (MDIIDNVDIT…PQQIINLIDN (381 aa)) are light chain nLC. Residues 382–804 (NNILLIKSYI…LFNSKIQLTI (423 aa)) are N-heavy chain nHN. The tract at residues 805 to 1167 (KNEKPEYNLL…LNDIYSWTLI (363 aa)) is C-heavy chain nHC.

This sequence belongs to the botulism non-toxic nonhemagglutinin family.

Its function is as follows. Expression of the ptox operon (ntnh-orfX1-orfX2-orfX3-pmp1) in B.thuringiensis kills Anopheles but not Aedes mosquito 3rd instar larvae. The ntnh-pmp1 construct is about half as toxic. The sequence is that of Non-toxic nonhemagglutinin from Paraclostridium bifermentans (Clostridium bifermentans).